The chain runs to 357 residues: MNTMKRMDCRDLNQSELTQHCAELGLPKFRGRQVFQWVQQKAVQNWEELRNIGAGDRQKLQEGLFLQPLRKVREQIAQDGTRKFLFRCADGETLECVLMDYDRRKNRDRHTVCVSTQIGCAVGCAFCATGLGGWRRNLSPGEILGQVLDITYLMRQEDPDFQVTNIVFMGMGEPLLNYEAVLKAIELLNDPEGQGIGMRRMTISTSGVAPKIRQLAKDNPQVGLAVSLHSAHNTTRDQLIPMNRKYPLEELMEACGDYTTLTNRRITFEIALISGQATLEAAQAVGHLLKGQLAHVNLIPVNPVAGTGMARPTAKEVQQFAQSLESMGIPVSVREEKGTDIDAACGQLRRQLECEQK.

Catalysis depends on Glu95, which acts as the Proton acceptor. Positions 106–340 constitute a Radical SAM core domain; it reads NRDRHTVCVS…VSVREEKGTD (235 aa). A disulfide bridge links Cys113 with Cys345. [4Fe-4S] cluster contacts are provided by Cys120, Cys124, and Cys127. Residues 172–173, Ser204, 227–229, and Asn302 each bind S-adenosyl-L-methionine; these read GE and SLH. Cys345 (S-methylcysteine intermediate) is an active-site residue.

This sequence belongs to the radical SAM superfamily. RlmN family. It depends on [4Fe-4S] cluster as a cofactor.

The protein localises to the cytoplasm. It carries out the reaction adenosine(2503) in 23S rRNA + 2 reduced [2Fe-2S]-[ferredoxin] + 2 S-adenosyl-L-methionine = 2-methyladenosine(2503) in 23S rRNA + 5'-deoxyadenosine + L-methionine + 2 oxidized [2Fe-2S]-[ferredoxin] + S-adenosyl-L-homocysteine. It catalyses the reaction adenosine(37) in tRNA + 2 reduced [2Fe-2S]-[ferredoxin] + 2 S-adenosyl-L-methionine = 2-methyladenosine(37) in tRNA + 5'-deoxyadenosine + L-methionine + 2 oxidized [2Fe-2S]-[ferredoxin] + S-adenosyl-L-homocysteine. Specifically methylates position 2 of adenine 2503 in 23S rRNA and position 2 of adenine 37 in tRNAs. In Desulfitobacterium hafniense (strain DSM 10664 / DCB-2), this protein is Probable dual-specificity RNA methyltransferase RlmN.